We begin with the raw amino-acid sequence, 168 residues long: Peptide methionine sulfoxide reductase 2 (168 aa).

Residues 40 to 168 enclose the MsrB domain; it reads DVKWNDALTP…NSASLNLKKD (129 aa). The Zn(2+) site is built by C79, C82, C128, and C131. Cysteines 97 and 157 form a disulfide. The active-site Nucleophile is the C157.

It belongs to the MsrB Met sulfoxide reductase family. It depends on Zn(2+) as a cofactor.

The enzyme catalyses L-methionyl-[protein] + [thioredoxin]-disulfide + H2O = L-methionyl-(R)-S-oxide-[protein] + [thioredoxin]-dithiol. Methionine-R-sulfoxide reductase which catalyzes the reduction of methionine sulfoxide (MetSO) to methionine in proteins. Plays a protective role against oxidative stress by restoring activity to proteins that have been inactivated by methionine oxidation. Protects iron-sulfur clusters from oxidative inactivation along with MXR1. Involved in the regulation of lifespan. The sequence is that of Peptide methionine sulfoxide reductase 2 (MXR2) from Saccharomyces cerevisiae (strain ATCC 204508 / S288c) (Baker's yeast).